Consider the following 385-residue polypeptide: Acetate kinase (385 aa).

Asn9 contacts Mg(2+). Position 16 (Lys16) interacts with ATP. Arg87 is a substrate binding site. Asp144 functions as the Proton donor/acceptor in the catalytic mechanism. ATP-binding positions include 202–206 (HLGSG) and 277–279 (DMR). Mg(2+) is bound at residue Glu373.

The protein belongs to the acetokinase family. Homodimer. Requires Mg(2+) as cofactor. Mn(2+) serves as cofactor.

It is found in the cytoplasm. The enzyme catalyses acetate + ATP = acetyl phosphate + ADP. It functions in the pathway metabolic intermediate biosynthesis; acetyl-CoA biosynthesis; acetyl-CoA from acetate: step 1/2. Catalyzes the formation of acetyl phosphate from acetate and ATP. Can also catalyze the reverse reaction. This Rickettsia prowazekii (strain Madrid E) protein is Acetate kinase.